The sequence spans 79 residues: MSITIWILLIIVALFGGLVGGIFIARKQIEKEIGEHPRLTPDAIREMMSQMGQKPSEAKVQQTYRNIVKHAKTAIKTKK.

Residues I5–A25 form a helical membrane-spanning segment.

This sequence belongs to the UPF0154 family.

The protein localises to the membrane. This is UPF0154 protein SAG1601 from Streptococcus agalactiae serotype V (strain ATCC BAA-611 / 2603 V/R).